Consider the following 1505-residue polypeptide: MNTHNNNYQQRSMDSAIVTINDKGYIQSVDRKTCELFGYTIEELQLQKVNILVPSPYKEQHDTYMQSYFETGVRKIIDKSRVVEGLHKDGSVFPITLSVTEVRIWNKRMFIGSIESIIDKRLIIYTDVHGIITYCNRNVEELIGYTPAELFGKNVSALMPSPHAKSHSEYIEKNYHGGGLWKMLNRVRNLPIKHKSGVVFLVSILVTKISTDGIDMFKAIIQTPPKEAVFTINGDGIIKACNFNFTEPMFGYTQKDLLGNTIGLLIPEMSKIIDNTSLNLTDSHDPQLQQQQQTTTTTTTTTTTTSTTSTTTSTPTPASIAVSGNNISSPPIDSPLTTPSTPTTFNHSRGVESWLGRTRKVDVWHRDGSRFPVNLEIIKLQGENSMFSLQIKKVENPRVYGKDKDKNGGGGGTTENKDGKQLDTIKESKEHRHSKEKKKRKKDRDHNNNNNNNNNNNNNNNEQTSDSSDSSDSDSESRSKKKRSSKKKSRRDDSSSDSSDSETESSSSPHKKNRSSNSSSNSSHSNAPHESSYYQPEMIGEYTLGKTLGRGNYGVVKLGTHINTKEEIAIKILYKEQMTESEFTRCKREIEILKQLYHPFINKLLNVLEKDDAMFILMDYCQGGDLFHYVNKFGLKGVKMVNSPDIGDQVLMGVPLPEDDTKRIFTQICLGIAHCHKLNIAHRDIKHKNILFDNQMNVKIIDFGLSNWSYQEKMSFCGTPAYAAPEMLLGINYNGPEVDIWSLGVILYSLVTGKLPFINVTDMIVGKFILPPSIPLDLQDLIKKMLTVDREHRLNIMNVLNHPWLSKDPASSTLISQNLLHSPPVVHQPQPPQHQKIQPTSIIPNFNEVETLKNNILNNNNNNNNNNNNNNNNILNSNNNNNNNNNNNSNNNNIINNSNNNSNNNNNINNNINNNNNVNNNVNNNKNNNNNNNNNSNNNSNNGNNIPNSSNNTNSIINNNLYNQSLSPQNNNIYQHSPQHQQHQHQQQHSPQQQQHQQHQHHQQQQQQLQQQHHQQHHQQHQQHQQQHQQQHQQQHQQHQQHQQSHQQPPVYFPTQIISDDFNLTSQLQRTQPNQQVSFDTNQSYQQQLQQPQIPHQVLMQQPPQILSHSNNQPINNYYVGQQPIQQIQQLQQQQQLQQQQQQQQQQQQQQQQQQQQQQQQQQQQQQQQQQQQQQQQQQQQQQQQQQNDPNFQPHLRRIKMSKRDNSYNKRKSEDGDSYKKRDNQSYDDILKDEGNKRLRELQTYSEGDKSRQHYNRDSNDNSRDNNRYNNRDNNNNNNSNNNRERDRYKKNKNENFDYGKYKFGKSNEDEENKDKPNIVREKPDFKPSGSLKNDSSSNYGTISSGRNNNNGEEDEENKIKLKWHEPAEAKLPTEKWMLYPFKGKDQLDTIYLHRKKSFLFGRNRDIADIPIDHPSCSSQHAVIVFRIRKKENPNTGSIKTFILPYIIDLESTNGTFLKGEKIEPAKYFELRPKDKITFGTSTREYILLCEDSIEGDESEEEDSD.

3 PAS domains span residues 2 to 72 (NTHN…FETG), 108 to 178 (RMFI…YHGG), and 215 to 284 (DMFK…TDSH). Disordered stretches follow at residues 282–348 (DSHD…FNHS) and 398–533 (RVYG…ESSY). Low complexity-rich tracts occupy residues 289 to 314 (QQQQ…TTST) and 328 to 344 (SSPP…TPTT). 2 stretches are compositionally biased toward basic and acidic residues: residues 398 to 407 (RVYGKDKDKN) and 415 to 430 (ENKD…ESKE). The segment covering 431–443 (HRHSKEKKKRKKD) has biased composition (basic residues). Low complexity predominate over residues 448 to 468 (NNNNNNNNNNNNNNEQTSDSS). Basic residues predominate over residues 479–489 (SKKKRSSKKKS). Over residues 515-532 (SSNSSSNSSHSNAPHESS) the composition is skewed to low complexity. Positions 542–805 (YTLGKTLGRG…IMNVLNHPWL (264 aa)) constitute a Protein kinase domain. Residues 548 to 556 (LGRGNYGVV) and Lys-571 each bind ATP. Catalysis depends on Asp-684, which acts as the Proton acceptor. Over residues 855 to 960 (NILNNNNNNN…NNTNSIINNN (106 aa)) the composition is skewed to low complexity. Disordered regions lie at residues 855-1048 (NILN…SHQQ), 1072-1091 (QPNQ…QLQQ), and 1181-1358 (QQQQ…DEEN). Residues 903–939 (NNNNNINNNINNNNNVNNNVNNNKNNNNNNNNNSNNN) adopt a coiled-coil conformation. Positions 961 to 974 (LYNQSLSPQNNNIY) are enriched in polar residues. Low complexity-rich tracts occupy residues 975-1013 (QHSP…QQQH) and 1022-1048 (QQHQ…SHQQ). Positions 1072–1082 (QPNQQVSFDTN) are enriched in polar residues. Residues 1125-1189 (IQQIQQLQQQ…QQQQQQQQND (65 aa)) are a coiled coil. Basic and acidic residues predominate over residues 1202-1271 (SKRDNSYNKR…NSRDNNRYNN (70 aa)). A compositionally biased stretch (low complexity) spans 1272–1282 (RDNNNNNNSNN). 2 stretches are compositionally biased toward basic and acidic residues: residues 1283 to 1301 (NRER…DYGK) and 1313 to 1326 (NKDK…KPDF). Residues 1331–1347 (SLKNDSSSNYGTISSGR) are compositionally biased toward polar residues. Residues 1399-1463 (FLFGRNRDIA…NGTFLKGEKI (65 aa)) enclose the FHA domain.

It belongs to the protein kinase superfamily. CAMK Ser/Thr protein kinase family. SNF1 subfamily.

The catalysed reaction is L-seryl-[protein] + ATP = O-phospho-L-seryl-[protein] + ADP + H(+). It carries out the reaction L-threonyl-[protein] + ATP = O-phospho-L-threonyl-[protein] + ADP + H(+). This is Probable serine/threonine-protein kinase DDB_G0280133 from Dictyostelium discoideum (Social amoeba).